A 407-amino-acid polypeptide reads, in one-letter code: Extracellular superoxide dismutase [Cu-Zn] 3 (407 aa).

A signal peptide spans 1–19; the sequence is MRLLSVLVFLISVISIAKA. Residues 20-386 lie on the Extracellular side of the membrane; sequence DYQYAFCKFN…SESYNDNEPG (367 aa). 3 N-linked (GlcNAc...) asparagine glycosylation sites follow: N51, N205, and N224. Cu cation contacts are provided by H245 and H247. Residue N256 is glycosylated (N-linked (GlcNAc...) asparagine). H263 provides a ligand contact to Cu cation. Zn(2+) is bound by residues H263, H271, H280, and D283. Position 320 (H320) interacts with Cu cation. 2 N-linked (GlcNAc...) asparagine glycosylation sites follow: N321 and N364. The helical transmembrane segment at 387 to 406 threads the bilayer; sequence SSSTVIPFFALIIFSIIFAL. L407 is a topological domain (cytoplasmic).

The protein belongs to the Cu-Zn superoxide dismutase family. It depends on Cu cation as a cofactor. Zn(2+) serves as cofactor.

It is found in the cell membrane. It catalyses the reaction 2 superoxide + 2 H(+) = H2O2 + O2. Protect the extracellular space from toxic effect of reactive oxygen intermediates by converting superoxyde radicals into hydrogen peroxyde and oxygen. This is Extracellular superoxide dismutase [Cu-Zn] 3 (sodC) from Dictyostelium discoideum (Social amoeba).